A 511-amino-acid polypeptide reads, in one-letter code: Histidine ammonia-lyase 2 (511 aa).

A cross-link (5-imidazolinone (Ser-Gly)) is located at residues 144-146 (SSG). A 2,3-didehydroalanine (Ser) modification is found at S145.

It belongs to the PAL/histidase family. Post-translationally, contains an active site 4-methylidene-imidazol-5-one (MIO), which is formed autocatalytically by cyclization and dehydration of residues Ser-Ser-Gly.

The protein resides in the cytoplasm. It carries out the reaction L-histidine = trans-urocanate + NH4(+). It participates in amino-acid degradation; L-histidine degradation into L-glutamate; N-formimidoyl-L-glutamate from L-histidine: step 1/3. The chain is Histidine ammonia-lyase 2 (hutH2) from Fusobacterium nucleatum subsp. nucleatum (strain ATCC 25586 / DSM 15643 / BCRC 10681 / CIP 101130 / JCM 8532 / KCTC 2640 / LMG 13131 / VPI 4355).